Reading from the N-terminus, the 201-residue chain is Probable molybdenum cofactor guanylyltransferase (201 aa).

Residues leucine 16–glycine 18, lysine 28, aspartate 75, and aspartate 107 contribute to the GTP site. Aspartate 107 contributes to the Mg(2+) binding site.

This sequence belongs to the MobA family. Requires Mg(2+) as cofactor.

The protein resides in the cytoplasm. It catalyses the reaction Mo-molybdopterin + GTP + H(+) = Mo-molybdopterin guanine dinucleotide + diphosphate. Functionally, transfers a GMP moiety from GTP to Mo-molybdopterin (Mo-MPT) cofactor (Moco or molybdenum cofactor) to form Mo-molybdopterin guanine dinucleotide (Mo-MGD) cofactor. The chain is Probable molybdenum cofactor guanylyltransferase from Mycobacterium marinum (strain ATCC BAA-535 / M).